The sequence spans 156 residues: Small ribosomal subunit protein uS7 (156 aa).

The protein belongs to the universal ribosomal protein uS7 family. As to quaternary structure, part of the 30S ribosomal subunit. Contacts proteins S9 and S11.

Its function is as follows. One of the primary rRNA binding proteins, it binds directly to 16S rRNA where it nucleates assembly of the head domain of the 30S subunit. Is located at the subunit interface close to the decoding center, probably blocks exit of the E-site tRNA. This is Small ribosomal subunit protein uS7 from Limosilactobacillus reuteri (strain DSM 20016) (Lactobacillus reuteri).